The chain runs to 286 residues: 4-diphosphocytidyl-2-C-methyl-D-erythritol kinase (286 aa).

K11 is a catalytic residue. 94–104 (PMGGGIGGGSS) contributes to the ATP binding site. D136 is an active-site residue.

This sequence belongs to the GHMP kinase family. IspE subfamily.

The catalysed reaction is 4-CDP-2-C-methyl-D-erythritol + ATP = 4-CDP-2-C-methyl-D-erythritol 2-phosphate + ADP + H(+). It participates in isoprenoid biosynthesis; isopentenyl diphosphate biosynthesis via DXP pathway; isopentenyl diphosphate from 1-deoxy-D-xylulose 5-phosphate: step 3/6. Functionally, catalyzes the phosphorylation of the position 2 hydroxy group of 4-diphosphocytidyl-2C-methyl-D-erythritol. In Pseudomonas putida (strain GB-1), this protein is 4-diphosphocytidyl-2-C-methyl-D-erythritol kinase.